The primary structure comprises 396 residues: MVAGTRCLLALLLPQVLLGGAAGLIPELGRRKFAASWPGRSSSQPSDDVLSEFELRLLSMFGLKQRPTPSRDPVVPPYMLDLYRLHSGQPGAPAPGHRLERAASLANTVRTFHHEESLEELPEMSGKTTRRFFFNLTSIPTEEFITSAELQVFGKHMPEALENNSSFHHRINIFEIIKPATANSKFPVTRLLDTRLVTQNASRWESFDVTPAVMRWTAQGLTNHGFVVEVAHPEDSYGASKRHVRISRSLHQDEHSWSQIRPLLVTFGHDGKGHPLHRREKRQAKHKQRKRLKSSCKRHPLYVDFSDVGWNDWIVAPPGYHAFYCHGECPFPLADHLNSTNHAIVQTLVNSVNSKIPKACCVPTELSAISMLYLDENEKVVLKNYQDMVVEGCGCR.

The N-terminal stretch at 1 to 23 (MVAGTRCLLALLLPQVLLGGAAG) is a signal peptide. Residues 24–282 (LIPELGRRKF…GHPLHRREKR (259 aa)) constitute a propeptide, cleaved by PCSK5. S87 carries the post-translational modification Phosphoserine. Residues N135, N163, N164, and N200 are each glycosylated (N-linked (GlcNAc...) asparagine). Residues 272–293 (KGHPLHRREKRQAKHKQRKRLK) are disordered. The span at 274–293 (HPLHRREKRQAKHKQRKRLK) shows a compositional bias: basic residues. 3 disulfide bridges follow: C296-C361, C325-C393, and C329-C395. N-linked (GlcNAc...) asparagine glycosylation occurs at N338.

The protein belongs to the TGF-beta family. In terms of assembly, homodimer; disulfide-linked. Interacts with SOSTDC1. Interacts with GREM2, RGMA, RGMB and RGMC. Interacts with ASPN. Interacts with MAFP5. Interacts with FBN1 (via N-terminal domain) and FBN2. Interacts with type I receptor BMPR1A. Interacts with type II receptor BMPR2. Interacts with ERFE. Interacts with BMPR1A/ALK3; the interaction may induce HAMP expression. Interacts with TGFBR3.

The protein localises to the secreted. Its function is as follows. Growth factor of the TGF-beta superfamily that plays essential roles in many developmental processes, including cardiogenesis, neurogenesis, and osteogenesis. Induces cartilage and bone formation. Initiates the canonical BMP signaling cascade by associating with type I receptor BMPR1A and type II receptor BMPR2. Once all three components are bound together in a complex at the cell surface, BMPR2 phosphorylates and activates BMPR1A. In turn, BMPR1A propagates signal by phosphorylating SMAD1/5/8 that travel to the nucleus and act as activators and repressors of transcription of target genes. Also acts to promote expression of HAMP, via the interaction with its receptor BMPR1A/ALK3. Can also signal through non-canonical pathways such as ERK/MAP kinase signaling cascade that regulates osteoblast differentiation. Also stimulates the differentiation of myoblasts into osteoblasts via the EIF2AK3-EIF2A-ATF4 pathway by stimulating EIF2A phosphorylation which leads to increased expression of ATF4 which plays a central role in osteoblast differentiation. Acts as a positive regulator of odontoblast differentiation during mesenchymal tooth germ formation, expression is repressed during the bell stage by MSX1-mediated inhibition of CTNNB1 signaling. The protein is Bone morphogenetic protein 2 (BMP2) of Dama dama (Fallow deer).